Reading from the N-terminus, the 393-residue chain is S-adenosylmethionine synthase (393 aa).

His16 lines the ATP pocket. Asp18 contacts Mg(2+). Glu44 contacts K(+). 2 residues coordinate L-methionine: Glu57 and Gln100. The segment at 100-110 is flexible loop; sequence QSPDIVMGVDG. Residues 165 to 167, 231 to 232, Asp240, 246 to 247, and Lys267 contribute to the ATP site; these read DAK, RF, and RK. An L-methionine-binding site is contributed by Asp240. Lys271 provides a ligand contact to L-methionine.

It belongs to the AdoMet synthase family. Homotetramer; dimer of dimers. Mg(2+) serves as cofactor. Requires K(+) as cofactor.

The protein resides in the cytoplasm. It carries out the reaction L-methionine + ATP + H2O = S-adenosyl-L-methionine + phosphate + diphosphate. It functions in the pathway amino-acid biosynthesis; S-adenosyl-L-methionine biosynthesis; S-adenosyl-L-methionine from L-methionine: step 1/1. In terms of biological role, catalyzes the formation of S-adenosylmethionine (AdoMet) from methionine and ATP. The overall synthetic reaction is composed of two sequential steps, AdoMet formation and the subsequent tripolyphosphate hydrolysis which occurs prior to release of AdoMet from the enzyme. The sequence is that of S-adenosylmethionine synthase from Coxiella burnetii (strain CbuG_Q212) (Coxiella burnetii (strain Q212)).